Consider the following 75-residue polypeptide: Rugosin-LK2 (75 aa).

An N-terminal signal peptide occupies residues 1 to 24 (MFTMKKSLLFLFFLGTISLSFCEG). Residues 25 to 40 (ERSADEDDEGEMTEEE) constitute a propeptide that is removed on maturation.

As to expression, expressed by the skin glands.

Its subcellular location is the secreted. Has antimicrobial activity against Gram-positive bacteria S.aureus ATCC 2592 (MIC=10.0 uM), S.aureus ATCC 43300 (MIC=10.0 uM) and B.subtilis (MIC=30.0 uM), against Gram-negative bacteria E.coli ML-35P (MIC=10.0 uM), P.aeruginosa PA01 (MIC=2.5 uM) and P.aeruginosa ATCC 27853 (MIC=2.5 uM) and against fungus C.albicans ATCC 2002 (MIC=10.0 uM). This is Rugosin-LK2 from Limnonectes kuhlii (Kuhl's Creek frog).